The following is an 863-amino-acid chain: Transforming growth factor-beta receptor-associated protein 1 homolog (863 aa).

In terms of domain architecture, CNH spans 23–297 (RINIECIECC…QLLQDFEGKV (275 aa)). Residues 564 to 729 (RPTSEERRGQ…LLSVYLDPDV (166 aa)) form a CHCR repeat.

The protein belongs to the TRAP1 family. Component of the putative class C core vacuole/endosome tethering (CORVET) complex.

The protein localises to the cytoplasm. It localises to the early endosome. Functionally, plays a role in the TGF-beta signaling pathway. In terms of biological role, plays a role in vesicle-mediated protein trafficking of the endocytic membrane transport pathway. Believed to act as a component of the putative CORVET endosomal tethering complexes which is proposed to be involved in the Rab5-to-Rab7 endosome conversion probably implicating MON1A/B, and via binding SNAREs and SNARE complexes to mediate tethering and docking events during SNARE-mediated membrane fusion. The CORVET complex is proposed to function as a Rab5 effector to mediate early endosome fusion probably in specific endosome subpopulations. This Danio rerio (Zebrafish) protein is Transforming growth factor-beta receptor-associated protein 1 homolog (tgfbrap1).